The following is a 341-amino-acid chain: Putative [LysW]-lysine/[LysW]-ornithine hydrolase (341 aa).

His62 lines the Zn(2+) pocket. The active site involves Asp64. Asp86 is a binding site for Zn(2+). The active-site Proton acceptor is the Glu115. Glu116, Glu140, and His309 together coordinate Zn(2+).

This sequence belongs to the peptidase M20A family. LysK subfamily. Zn(2+) serves as cofactor. Requires Co(2+) as cofactor.

It is found in the cytoplasm. It catalyses the reaction [amino-group carrier protein]-C-terminal-gamma-(L-lysyl)-L-glutamate + H2O = [amino-group carrier protein]-C-terminal-L-glutamate + L-lysine. It carries out the reaction [amino-group carrier protein]-C-terminal-gamma-(L-ornithyl)-L-glutamate + H2O = [amino-group carrier protein]-C-terminal-L-glutamate + L-ornithine. Its pathway is amino-acid biosynthesis; L-lysine biosynthesis via AAA pathway; L-lysine from L-alpha-aminoadipate (Thermus route): step 5/5. It functions in the pathway amino-acid biosynthesis; L-arginine biosynthesis. Catalyzes the release of L-lysine from [LysW]-gamma-L-lysine and the release of L-ornithine from [LysW]-L-ornithine. This is Putative [LysW]-lysine/[LysW]-ornithine hydrolase from Pyrobaculum aerophilum (strain ATCC 51768 / DSM 7523 / JCM 9630 / CIP 104966 / NBRC 100827 / IM2).